Consider the following 145-residue polypeptide: Hemoglobin fetal subunit beta (145 aa).

In terms of domain architecture, Globin spans 1–145 (MLSAEEKAAV…VANALAHRYH (145 aa)). Heme b contacts are provided by H62 and H91.

The protein belongs to the globin family. In terms of assembly, heterotetramer of two alpha chains and two beta chains. Red blood cells.

Functionally, involved in oxygen transport from the lung to the various peripheral tissues. The sequence is that of Hemoglobin fetal subunit beta from Bos taurus (Bovine).